The sequence spans 449 residues: Glutamate--tRNA ligase 2 (449 aa).

Residues 17-27 (PSPTGFLHVGN) carry the 'HIGH' region motif. Positions 248 to 252 (ALSKR) match the 'KMSKS' region motif. Lys-251 contributes to the ATP binding site.

Belongs to the class-I aminoacyl-tRNA synthetase family. Glutamate--tRNA ligase type 1 subfamily. Monomer.

The protein localises to the cytoplasm. It carries out the reaction tRNA(Glu) + L-glutamate + ATP = L-glutamyl-tRNA(Glu) + AMP + diphosphate. Functionally, catalyzes the attachment of glutamate to tRNA(Glu) in a two-step reaction: glutamate is first activated by ATP to form Glu-AMP and then transferred to the acceptor end of tRNA(Glu). The polypeptide is Glutamate--tRNA ligase 2 (Jannaschia sp. (strain CCS1)).